We begin with the raw amino-acid sequence, 392 residues long: WD repeat-containing protein GTS1 (392 aa).

WD repeat units lie at residues G81 to R124, G128 to C167, S171 to D211, and G323 to N368.

As to expression, expressed in germinating seeds, rosettes leaves, flowers and siliques.

Functionally, involved in the control of plant growth development. Acts as negative regulator of seed germination, cell division in meristematic regions, plant growth and overall biomass accumulation. May function by regulating ribosome activities and biogenesis in plant cells. The chain is WD repeat-containing protein GTS1 from Arabidopsis thaliana (Mouse-ear cress).